We begin with the raw amino-acid sequence, 545 residues long: Chaperonin GroEL 2 (545 aa).

ATP contacts are provided by residues 29-32 (TLGP), 86-90 (DGTTT), Gly-413, 479-481 (NAA), and Asp-495.

It belongs to the chaperonin (HSP60) family. Forms a cylinder of 14 subunits composed of two heptameric rings stacked back-to-back. Interacts with the co-chaperonin GroES.

It is found in the cytoplasm. The catalysed reaction is ATP + H2O + a folded polypeptide = ADP + phosphate + an unfolded polypeptide.. Together with its co-chaperonin GroES, plays an essential role in assisting protein folding. The GroEL-GroES system forms a nano-cage that allows encapsulation of the non-native substrate proteins and provides a physical environment optimized to promote and accelerate protein folding. The chain is Chaperonin GroEL 2 from Prochlorococcus marinus (strain MIT 9312).